Reading from the N-terminus, the 212-residue chain is Ras-like protein (212 aa).

Position 15–22 (15–22) interacts with GTP; that stretch reads GGGGVGKS. Positions 37 to 45 match the Effector region motif; it reads YDPTIEDSY. GTP contacts are provided by residues 62 to 66 and 121 to 124; these read DTAGQ and NKCD. Residues C205 and C206 are each lipidated (S-palmitoyl cysteine). The residue at position 209 (C209) is a Cysteine methyl ester. Residue C209 is the site of S-geranylgeranyl cysteine attachment. Positions 210-212 are cleaved as a propeptide — removed in mature form; sequence IVM.

This sequence belongs to the small GTPase superfamily. Ras family.

The protein localises to the cell membrane. The enzyme catalyses GTP + H2O = GDP + phosphate + H(+). With respect to regulation, alternates between an inactive form bound to GDP and an active form bound to GTP. Activated by a guanine nucleotide-exchange factor (GEF) and inactivated by a GTPase-activating protein (GAP). The chain is Ras-like protein (rasA) from Emericella nidulans (strain FGSC A4 / ATCC 38163 / CBS 112.46 / NRRL 194 / M139) (Aspergillus nidulans).